The following is a 393-amino-acid chain: UDP-glucose 6-dehydrogenase (393 aa).

NAD(+) is bound by residues Val-11, Asp-31, Lys-36, Thr-85, Thr-120, and Glu-147. Substrate is bound by residues 143–147, Lys-199, Asn-203, 244–248, and Gly-252; these read EFLRE and YNNPS. Position 254 (Tyr-254) interacts with NAD(+). Cys-255 functions as the Nucleophile in the catalytic mechanism. Lys-258 lines the NAD(+) pocket. Lys-309 serves as a coordination point for substrate. Residue Arg-316 participates in NAD(+) binding.

The protein belongs to the UDP-glucose/GDP-mannose dehydrogenase family. In terms of assembly, homodimer.

It carries out the reaction UDP-alpha-D-glucose + 2 NAD(+) + H2O = UDP-alpha-D-glucuronate + 2 NADH + 3 H(+). It participates in nucleotide-sugar biosynthesis; UDP-alpha-D-glucuronate biosynthesis; UDP-alpha-D-glucuronate from UDP-alpha-D-glucose: step 1/1. It functions in the pathway capsule biogenesis; capsule polysaccharide biosynthesis. Catalyzes the formation of UDP-glucuronic acid which is required for capsular polysaccharide synthesis. Does not catalyze the formation of glucuronamide moiety of the capsular polysaccharide. The chain is UDP-glucose 6-dehydrogenase from Campylobacter jejuni subsp. jejuni serotype O:2 (strain ATCC 700819 / NCTC 11168).